The following is a 592-amino-acid chain: Pectinesterase/pectinesterase inhibitor 3 (592 aa).

The N-terminal stretch at 1–35 is a signal peptide; that stretch reads MAPSMKEIFSKDNFKKNKKLVLLSAAVALLFVAAV. Positions 36 to 238 are cleaved as a propeptide — removed in mature 42 kDa form; that stretch reads AGISAGASKA…KITSNNRKLK (203 aa). Positions 36-273 are cleaved as a propeptide — removed in mature 38 kDa form; it reads AGISAGASKA…WLSAGDRRLL (238 aa). The pectinesterase inhibitor 3 stretch occupies residues 53–212; it reads PSSHAVLRSS…EHMCSNALAM (160 aa). N-linked (GlcNAc...) asparagine glycans are attached at residues Asn96 and Asn215. The tract at residues 281-578 is pectinesterase 3; that stretch reads DATVAADGSG…YTAGQFIGGG (298 aa). 2 residues coordinate substrate: Thr356 and Gln386. Asp409 (proton donor; for pectinesterase activity) is an active-site residue. The cysteines at positions 423 and 443 are disulfide-linked. The Nucleophile; for pectinesterase activity role is filled by Asp430. Gln454, Arg498, and Trp500 together coordinate substrate.

This sequence in the N-terminal section; belongs to the PMEI family. The protein in the C-terminal section; belongs to the pectinesterase family. As to quaternary structure, interacts with BIIDXI and At5g11420. Binds reversibly to PMEI4, PMEI7 and PMEI8 to be inhibited; the stability of the PME3-PMEIs complexes and the inhibition of the pectin methylesterase (PME) activity is pH-dependent, based on protonation status of amino-acids at the complex interface. As to expression, expressed in roots, cotyledons, hypocotyls, seedlings, leaves, stems, flowers, dry seeds and siliques. Accumulates in etiolated hypocotyls (at protein level).

It localises to the secreted. The protein localises to the extracellular space. The protein resides in the apoplast. It is found in the cell wall. It catalyses the reaction [(1-&gt;4)-alpha-D-galacturonosyl methyl ester](n) + n H2O = [(1-&gt;4)-alpha-D-galacturonosyl](n) + n methanol + n H(+). Its pathway is glycan metabolism; pectin degradation; 2-dehydro-3-deoxy-D-gluconate from pectin: step 1/5. Regulated negatively by pectinesterase inhibitors (e.g. PMEI3, PMEI4, PMEI7 and PMEI9) in a pH-dependent manner, mainly in slightly acidic conditions (pH 6.0 and 5.0), especially in dark-grown hypocotyls; this processus relies on changes in the protonation of amino acids involved in intermolecular and intramolecular interactions. In terms of biological role, acts in the modification of cell walls via demethylesterification of cell wall pectin. Required for zinc Zn(2+) homeostasis and to monitor Zn(2+) influence on cell wall-controlled growth processes such as root cell elongation. Monitors seed germination and favors root hairs production. Prevents cruciferin seed storage proteins activity, but promotes the expression of genes involved in cell wall organization and remodeling as well as genes involved in lipid and protein metabolism, during post-germinative growth of seedlings. Confers sensitivity to Zn(2+) when overexpressed. Acts as a susceptibility factor required for the initial colonization of the host tissue by virulent pathogens including Botrytis cinerea and Pectobacterium carotovorum, probably by facilitating cell wall pectine degradation by pathogen pectic enzymes after its demethylesterification. This chain is Pectinesterase/pectinesterase inhibitor 3, found in Arabidopsis thaliana (Mouse-ear cress).